A 200-amino-acid polypeptide reads, in one-letter code: Histone H1 (200 aa).

The segment covering 1–14 (MPPKKAPTTAKKAA) has biased composition (low complexity). Disordered stretches follow at residues 1–20 (MPPK…PTHT) and 78–200 (DFIQ…NKKA). The 76-residue stretch at 18-93 (THTSYRDMIK…GTSGPVKLAK (76 aa)) folds into the H15 domain. Over residues 94–116 (KQAPAKPAPKKPATTTKTAAPKK) the composition is skewed to low complexity. A compositionally biased stretch (basic and acidic residues) spans 120–131 (KKADKAEKAEKP). Residues 159–185 (TAAPAVVDKPKVVSVTKSGRKTTTTAK) show a composition bias toward low complexity.

The protein belongs to the histone H1/H5 family.

The protein resides in the nucleus. The protein localises to the chromosome. Could act as an H1-type linker histone. This Emericella nidulans (strain FGSC A4 / ATCC 38163 / CBS 112.46 / NRRL 194 / M139) (Aspergillus nidulans) protein is Histone H1 (hhoA).